A 499-amino-acid polypeptide reads, in one-letter code: MKRQEFALFSLTLMLSPWRRVLLPAVLAAMAGPALAQLKAPSQASRATGIFVPQSSDVAVPSSQPQLGVPQPSSGGKRSQLVDEVVAVVNNSVITRRELLDRADEIEAQLRTANRPAPPRADLLGEVLERLIMERVQTQAAQDAGIKVTDQELDRAIESVAQQNRLSATELRRRVEASGMTWTKYRDELRKQVQVIRLREREVDSKVQVYDGEIDNYLAARGGQGAAATGPTEFNVSQILVRVPENASDAQKQELQKKAEQLLKQAQGGADFAQLAQANSQGPEAAQGGAIGFREIGRLPALFANAVVDLQPGAVAPEVVESANGFHILKLTAKRVAPASTSASSPAAASRITQTQVRHILIRTGPNMPEAEARRQLGTLRDRITHGGDFADAAKRFSQDGSAQAGGELGWVSPGELVPEFEQAMNRLRPGEISEPVVTQFGVHLIQVENRRETEMAPEKQRDFARAEIREQKLRAAYDDWVRQLRSQAYVEYRVNRQR.

The first 36 residues, Met-1–Ala-36, serve as a signal peptide directing secretion. PpiC domains follow at residues Pro-231 to Ala-333 and Ile-352 to Asn-450.

It is found in the periplasm. The enzyme catalyses [protein]-peptidylproline (omega=180) = [protein]-peptidylproline (omega=0). Functionally, chaperone involved in the correct folding and assembly of outer membrane proteins. Recognizes specific patterns of aromatic residues and the orientation of their side chains, which are found more frequently in integral outer membrane proteins. May act in both early periplasmic and late outer membrane-associated steps of protein maturation. The sequence is that of Chaperone SurA from Cupriavidus pinatubonensis (strain JMP 134 / LMG 1197) (Cupriavidus necator (strain JMP 134)).